The chain runs to 299 residues: Oxygen-dependent coproporphyrinogen-III oxidase (299 aa).

Ser-92 contacts substrate. A divalent metal cation contacts are provided by His-96 and His-106. Residue His-106 is the Proton donor of the active site. 108-110 (NVR) lines the substrate pocket. Residues His-145 and His-175 each coordinate a divalent metal cation. The tract at residues 240–275 (YVEFNLVWDRGTLFGLQTGGRTESILMSMPPLVRWE) is important for dimerization. 258 to 260 (GGR) is a binding site for substrate.

The protein belongs to the aerobic coproporphyrinogen-III oxidase family. In terms of assembly, homodimer. It depends on a divalent metal cation as a cofactor.

Its subcellular location is the cytoplasm. It carries out the reaction coproporphyrinogen III + O2 + 2 H(+) = protoporphyrinogen IX + 2 CO2 + 2 H2O. It participates in porphyrin-containing compound metabolism; protoporphyrin-IX biosynthesis; protoporphyrinogen-IX from coproporphyrinogen-III (O2 route): step 1/1. Involved in the heme biosynthesis. Catalyzes the aerobic oxidative decarboxylation of propionate groups of rings A and B of coproporphyrinogen-III to yield the vinyl groups in protoporphyrinogen-IX. The sequence is that of Oxygen-dependent coproporphyrinogen-III oxidase from Citrobacter koseri (strain ATCC BAA-895 / CDC 4225-83 / SGSC4696).